We begin with the raw amino-acid sequence, 932 residues long: Protein translocase subunit SecA (932 aa).

Residues Q87, 105 to 109 (GEGKT), and D515 each bind ATP. Residues C916, C918, C927, and H928 each coordinate Zn(2+).

This sequence belongs to the SecA family. As to quaternary structure, monomer and homodimer. Part of the essential Sec protein translocation apparatus which comprises SecA, SecYEG and auxiliary proteins SecDF-YajC and YidC. It depends on Zn(2+) as a cofactor.

The protein localises to the cell inner membrane. The protein resides in the cytoplasm. It carries out the reaction ATP + H2O + cellular proteinSide 1 = ADP + phosphate + cellular proteinSide 2.. Part of the Sec protein translocase complex. Interacts with the SecYEG preprotein conducting channel. Has a central role in coupling the hydrolysis of ATP to the transfer of proteins into and across the cell membrane, serving both as a receptor for the preprotein-SecB complex and as an ATP-driven molecular motor driving the stepwise translocation of polypeptide chains across the membrane. The polypeptide is Protein translocase subunit SecA (Burkholderia multivorans (strain ATCC 17616 / 249)).